A 259-amino-acid chain; its full sequence is Protein SODIUM POTASSIUM ROOT DEFECTIVE 2 (259 aa).

A disordered region spans residues 141 to 165; the sequence is PDSITGSVDQDPAKTVEAEAPAGED. Basic and acidic residues predominate over residues 151-165; the sequence is DPAKTVEAEAPAGED. One can recognise an HMA domain in the interval 180 to 246; that stretch reads QQVVVLKVSL…KVKNAQFWTN (67 aa). Residues Cys191 and Cys194 each coordinate a metal cation.

The sequence is that of Protein SODIUM POTASSIUM ROOT DEFECTIVE 2 from Arabidopsis thaliana (Mouse-ear cress).